The chain runs to 346 residues: WD repeat-containing protein LWD1 (346 aa).

The residue at position 1 (Met1) is an N-acetylmethionine. WD repeat units lie at residues 79-121 (EHPY…SRVE), 133-173 (EFCG…VDTQ), 176-214 (AHDKEVFDIAWGGVGVFASVSADGSVRVFDLRDKEHSTI), and 265-305 (RHQA…QHVE).

The protein resides in the nucleus. Its function is as follows. Clock protein essential for the proper expression phase and period length of both the oscillator and output genes known to participate in photoperiod sensing. Required for the expression of APRR9, APRR7, and APRR5. Regulated by APRR9 and APRR7 at the transcriptional level, indicating the existence of a positive feedback loop within the circadian clock. May function to delay the expression of the morning genes until dawn approaches. The chain is WD repeat-containing protein LWD1 (LWD1) from Arabidopsis thaliana (Mouse-ear cress).